Consider the following 166-residue polypeptide: Cofilin-2 (166 aa).

At Ala-2 the chain carries N-acetylalanine. A Phosphoserine modification is found at Ser-3. Positions 4–153 (GVTVNDEVIK…KDRSTLGEKL (150 aa)) constitute an ADF-H domain. Thr-6 is subject to Phosphothreonine. The Nuclear localization signal signature appears at 30 to 34 (KKRKK).

This sequence belongs to the actin-binding proteins ADF family. In terms of processing, the phosphorylation of Ser-24 may prevent recognition of the nuclear localization signal.

It localises to the nucleus matrix. It is found in the cytoplasm. The protein resides in the cytoskeleton. Functionally, controls reversibly actin polymerization and depolymerization in a pH-sensitive manner. It has the ability to bind G- and F-actin in a 1:1 ratio of cofilin to actin. It is the major component of intranuclear and cytoplasmic actin rods. The polypeptide is Cofilin-2 (CFL2) (Bos taurus (Bovine)).